Here is a 323-residue protein sequence, read N- to C-terminus: Quinolinate synthase (323 aa).

Positions 37 and 54 each coordinate iminosuccinate. Cys-99 is a [4Fe-4S] cluster binding site. Iminosuccinate-binding positions include 125-127 and Ser-142; that span reads YIN. Residue Cys-185 participates in [4Fe-4S] cluster binding. Iminosuccinate is bound by residues 211 to 213 and Thr-228; that span reads HPE. Residue Cys-278 coordinates [4Fe-4S] cluster.

This sequence belongs to the quinolinate synthase family. Type 2 subfamily. The cofactor is [4Fe-4S] cluster.

The protein resides in the cytoplasm. It catalyses the reaction iminosuccinate + dihydroxyacetone phosphate = quinolinate + phosphate + 2 H2O + H(+). It participates in cofactor biosynthesis; NAD(+) biosynthesis; quinolinate from iminoaspartate: step 1/1. Its function is as follows. Catalyzes the condensation of iminoaspartate with dihydroxyacetone phosphate to form quinolinate. The sequence is that of Quinolinate synthase from Trichodesmium erythraeum (strain IMS101).